A 224-amino-acid chain; its full sequence is MSRKIEGFLLLLLFGYEATLGLSSTEDEGEDPWYQKACKCDCQGGPNALWSAGATSLDCIPECPYHKPLGFESGEVTPDQITCSNPEQYVGWYSSWTANKARLNSQGFGCAWLSKFQDSSQWLQIDLKEIKVISGILTQGRCDIDEWMTKYSVQYRTDERLNWIYYKDQTGNNRVFYGNSDRTSTVQNLLRPPIISRFIRLIPLGWHVRIAIRMELLECVSKCA.

The signal sequence occupies residues 1–23 (MSRKIEGFLLLLLFGYEATLGLS). The 157-residue stretch at 63-219 (CPYHKPLGFE…IAIRMELLEC (157 aa)) folds into the F5/8 type C domain. Disulfide bonds link Cys63–Cys219 and Cys110–Cys142.

As to quaternary structure, homooctamer of 4 homodimers; disulfide-linked. The homooctamer has a flat, cogwheel structure with a diameter of about 14 nm. Two stacked octamers can assemble to form a hexadecamer. In terms of tissue distribution, restricted to the retina (at protein level). Detected in the inner segment of the photoreceptors, the inner nuclear layer, the inner plexiform layer and the ganglion cell layer (at protein level). At the macula, expressed in both the outer and inner nuclear layers and in the inner plexiform layer (at protein level). Detected in retina. Detected only within the photoreceptor cell layer, most prominently within the inner segments of the photoreceptors. Undetectable in the inner plexiform layers and the inner nuclear layer.

It is found in the secreted. The protein localises to the cell membrane. Binds negatively charged membrane lipids, such as phosphatidylserine and phosphoinositides. May play a role in cell-cell adhesion processes in the retina, via homomeric interaction between octamers present on the surface of two neighboring cells. Required for normal structure and function of the retina. In Homo sapiens (Human), this protein is Retinoschisin (RS1).